The chain runs to 65 residues: Large ribosomal subunit protein bL31 (65 aa).

4 residues coordinate Zn(2+): cysteine 16, cysteine 18, cysteine 36, and cysteine 39.

Belongs to the bacterial ribosomal protein bL31 family. Type A subfamily. In terms of assembly, part of the 50S ribosomal subunit. Requires Zn(2+) as cofactor.

Functionally, binds the 23S rRNA. In Brevibacillus brevis (strain 47 / JCM 6285 / NBRC 100599), this protein is Large ribosomal subunit protein bL31.